Consider the following 179-residue polypeptide: Ribulose bisphosphate carboxylase small subunit, chloroplastic 2 (179 aa).

The transit peptide at 1-58 (MASSATMLSSVATAACVAPAQASMVAPFVGLKSASAFPVTQKTVTGLSTLPSNGGRVQ) directs the protein to the chloroplast.

It belongs to the RuBisCO small chain family. Heterohexadecamer of 8 large and 8 small subunits.

Its subcellular location is the plastid. It is found in the chloroplast. Its function is as follows. RuBisCO catalyzes two reactions: the carboxylation of D-ribulose 1,5-bisphosphate, the primary event in carbon dioxide fixation, as well as the oxidative fragmentation of the pentose substrate. Both reactions occur simultaneously and in competition at the same active site. Although the small subunit is not catalytic it is essential for maximal activity. This is Ribulose bisphosphate carboxylase small subunit, chloroplastic 2 from Fritillaria agrestis (Stinkbells).